The primary structure comprises 718 residues: Peroxisomal bifunctional enzyme (718 aa).

The tract at residues 2–280 (ARYELVKRSV…FAQRTAEKWT (279 aa)) is enoyl-CoA hydratase / isomerase. Gly-100 is a binding site for substrate. A 3-hydroxyacyl-CoA dehydrogenase region spans residues 281 to 567 (LPSGAQWNNS…DMVCQQGRFG (287 aa)). Residues 716–718 (SHL) carry the Microbody targeting signal motif.

In the N-terminal section; belongs to the enoyl-CoA hydratase/isomerase family. The protein in the C-terminal section; belongs to the 3-hydroxyacyl-CoA dehydrogenase family. As to quaternary structure, monomer.

The protein resides in the peroxisome. The enzyme catalyses a (3S)-3-hydroxyacyl-CoA = a (2E)-enoyl-CoA + H2O. It catalyses the reaction a 4-saturated-(3S)-3-hydroxyacyl-CoA = a (3E)-enoyl-CoA + H2O. It carries out the reaction a (3Z)-enoyl-CoA = a 4-saturated (2E)-enoyl-CoA. The catalysed reaction is a (3E)-enoyl-CoA = a 4-saturated (2E)-enoyl-CoA. The enzyme catalyses a (3S)-3-hydroxyacyl-CoA + NAD(+) = a 3-oxoacyl-CoA + NADH + H(+). It catalyses the reaction (2S,3S)-3-hydroxy-2-methylbutanoyl-CoA = (2E)-2-methylbut-2-enoyl-CoA + H2O. It carries out the reaction (3S)-hydroxyhexadecanoyl-CoA + NAD(+) = 3-oxohexadecanoyl-CoA + NADH + H(+). The catalysed reaction is (3S)-hydroxyhexadecanoyl-CoA = (2E)-hexadecenoyl-CoA + H2O. The enzyme catalyses (2E)-hexadecenedioyl-CoA + H2O = (3S)-hydroxyhexadecanedioyl-CoA. It catalyses the reaction (3S)-hydroxyhexadecanedioyl-CoA + NAD(+) = 3-oxohexadecanedioyl-CoA + NADH + H(+). It carries out the reaction (3E,5Z)-tetradecadienoyl-CoA = (2E,5Z)-tetradecadienoyl-CoA. The catalysed reaction is (3E,5Z)-octadienoyl-CoA = (2E,5Z)-octadienoyl-CoA. The enzyme catalyses (3S)-hydroxydecanoyl-CoA + NAD(+) = 3-oxodecanoyl-CoA + NADH + H(+). It catalyses the reaction (3E)-decenoyl-CoA = (2E)-decenoyl-CoA. It carries out the reaction (3Z)-hexenoyl-CoA = (2E)-hexenoyl-CoA. The catalysed reaction is (3E)-hexenoyl-CoA = (2E)-hexenoyl-CoA. The enzyme catalyses (3S)-hydroxydecanoyl-CoA = (2E)-decenoyl-CoA + H2O. It catalyses the reaction (3S)-hydroxyhexanoyl-CoA = (2E)-hexenoyl-CoA + H2O. It participates in lipid metabolism; fatty acid beta-oxidation. Peroxisomal trifunctional enzyme possessing 2-enoyl-CoA hydratase, 3-hydroxyacyl-CoA dehydrogenase, and delta 3, delta 2-enoyl-CoA isomerase activities. Catalyzes two of the four reactions of the long straight chain fatty acids peroxisomal beta-oxidation pathway. Can also use branched-chain fatty acids such as 2-methyl-2E-butenoyl-CoA as a substrate, which is hydrated into (2S,3S)-3-hydroxy-2-methylbutanoyl-CoA. Optimal isomerase for 2,5 double bonds into 3,5 form isomerization in a range of enoyl-CoA species. Also able to isomerize both 3-cis and 3-trans double bonds into the 2-trans form in a range of enoyl-CoA species. Regulates the amount of medium-chain dicarboxylic fatty acids which are essential regulators of all fatty acid oxidation pathways. Also involved in the degradation of long-chain dicarboxylic acids through peroxisomal beta-oxidation. This chain is Peroxisomal bifunctional enzyme (ehhadh), found in Danio rerio (Zebrafish).